A 306-amino-acid polypeptide reads, in one-letter code: Zinc finger protein 625 (306 aa).

Residues 31 to 53 (PRVKSCGEVSVGHASLNRHHRAD) form a C2H2-type 1; degenerate zinc finger. 8 C2H2-type zinc fingers span residues 69–91 (YKCTYCKKAFSDLPYFRTHEWAH), 97–119 (YDCEECGKSFISRSSIRRHRIMH), 125–147 (YKCNFCGKALMCLSLYLIHKRTH), 153–175 (YECKQCGKAFSHSGSLRIHERTH), 181–203 (YECSECGKAFHSSTCLHAHKITH), 209–231 (YECKQCGKAFVSFNSVRYHERTH), 237–259 (YECKQCGKAFRSASHLRTHGRTH), and 265–287 (YECKQCGKAFGCASSVKIHERTH). At Y209 the chain carries Phosphotyrosine. The interval 287–306 (HTGEKPCSSNTSKGQGEKIA) is disordered.

This sequence belongs to the krueppel C2H2-type zinc-finger protein family.

The protein resides in the nucleus. May be involved in transcriptional regulation. This chain is Zinc finger protein 625 (ZNF625), found in Homo sapiens (Human).